The sequence spans 92 residues: Alpha-conotoxin-like Mi20.1 (92 aa).

Residues 1–24 (MPKLEMMLLVLLILPLSSFSAAGE) form the signal peptide. Positions 25 to 45 (QVVQGDRRSDGLARYLQRGGR) are excised as a propeptide. Residue Glu49 is modified to 4-carboxyglutamate. Residue Pro55 is modified to 4-hydroxyproline. Disulfide bonds link Cys63–Cys72, Cys68–Cys80, Cys73–Cys90, and Cys78–Cys92.

The protein belongs to the conotoxin D superfamily. Hetero-, homo- or pseudo-homodimer (identical sequence, different post-translational modifications). One pseudo-homodimer of [carboxyGlu-49, hydroxyPro-55]Ml20.1 and [carboxyGlu-49, hydroxyPro-55, hydroxyPro-70]Ml20.1 may exist. As to expression, expressed by the venom duct.

Its subcellular location is the secreted. Alpha-conotoxins act on postsynaptic membranes, they bind to the nicotinic acetylcholine receptors (nAChR) and thus inhibit them. Through its two C-terminal domains, this homodimeric protein would bind to two nAChR allosteric sites, located outside the nAChR C-loop of the principal binding face and at the adjacent binding interface in a clockwise direction. This toxin specifically blocks mammalian neuronal nAChR of the alpha-7/CHRNA7, alpha-3-beta-2/CHRNA3-CHRNB2 and alpha-4-beta-2/CHRNA4-CHRNB2 subtypes. The sequence is that of Alpha-conotoxin-like Mi20.1 from Conus miles (Soldier cone).